Here is a 176-residue protein sequence, read N- to C-terminus: MYLVLLIAIILFITIILVIFLISGLFYPEQNPLLPISPPKKKCKIDVDCKDNGHHCVGGFCTKMNCLEAAKYDIKGIKLDPNIRSCNYTPKFYKFSSTADPQSPFGKSRIEYGELYDPHSGEEFCESLCANYPGCISWEYDQISGKTTGNCYFYRNPHPALKYKSDAVMAIPRKVL.

M1 is a topological domain (intravirion). Residues 2 to 22 (YLVLLIAIILFITIILVIFLI) traverse the membrane as a helical segment. At 23-176 (SGLFYPEQNP…AVMAIPRKVL (154 aa)) the chain is on the virion surface side.

This sequence belongs to the asfivirus envelope protein p22 family.

Its subcellular location is the virion membrane. It is found in the host cell membrane. This is Envelope protein 167 from African swine fever virus (isolate Warthog/Namibia/Wart80/1980) (ASFV).